Consider the following 128-residue polypeptide: Small ribosomal subunit protein uS12 (128 aa).

D89 is subject to 3-methylthioaspartic acid.

The protein belongs to the universal ribosomal protein uS12 family. As to quaternary structure, part of the 30S ribosomal subunit. Contacts proteins S8 and S17. May interact with IF1 in the 30S initiation complex.

Its function is as follows. With S4 and S5 plays an important role in translational accuracy. Functionally, interacts with and stabilizes bases of the 16S rRNA that are involved in tRNA selection in the A site and with the mRNA backbone. Located at the interface of the 30S and 50S subunits, it traverses the body of the 30S subunit contacting proteins on the other side and probably holding the rRNA structure together. The combined cluster of proteins S8, S12 and S17 appears to hold together the shoulder and platform of the 30S subunit. This Campylobacter jejuni subsp. doylei (strain ATCC BAA-1458 / RM4099 / 269.97) protein is Small ribosomal subunit protein uS12.